Consider the following 479-residue polypeptide: Aspartyl/glutamyl-tRNA(Asn/Gln) amidotransferase subunit B (479 aa).

Belongs to the GatB/GatE family. GatB subfamily. Heterotrimer of A, B and C subunits.

The catalysed reaction is L-glutamyl-tRNA(Gln) + L-glutamine + ATP + H2O = L-glutaminyl-tRNA(Gln) + L-glutamate + ADP + phosphate + H(+). The enzyme catalyses L-aspartyl-tRNA(Asn) + L-glutamine + ATP + H2O = L-asparaginyl-tRNA(Asn) + L-glutamate + ADP + phosphate + 2 H(+). Functionally, allows the formation of correctly charged Asn-tRNA(Asn) or Gln-tRNA(Gln) through the transamidation of misacylated Asp-tRNA(Asn) or Glu-tRNA(Gln) in organisms which lack either or both of asparaginyl-tRNA or glutaminyl-tRNA synthetases. The reaction takes place in the presence of glutamine and ATP through an activated phospho-Asp-tRNA(Asn) or phospho-Glu-tRNA(Gln). This Myxococcus xanthus (strain DK1622) protein is Aspartyl/glutamyl-tRNA(Asn/Gln) amidotransferase subunit B.